The following is a 74-amino-acid chain: Small ribosomal subunit protein bS18 (74 aa).

The protein belongs to the bacterial ribosomal protein bS18 family. As to quaternary structure, part of the 30S ribosomal subunit. Forms a tight heterodimer with protein bS6.

In terms of biological role, binds as a heterodimer with protein bS6 to the central domain of the 16S rRNA, where it helps stabilize the platform of the 30S subunit. The protein is Small ribosomal subunit protein bS18 of Chlorobaculum tepidum (strain ATCC 49652 / DSM 12025 / NBRC 103806 / TLS) (Chlorobium tepidum).